Reading from the N-terminus, the 366-residue chain is Alanine racemase (366 aa).

Lys-33 functions as the Proton acceptor; specific for D-alanine in the catalytic mechanism. N6-(pyridoxal phosphate)lysine is present on Lys-33. Arg-129 serves as a coordination point for substrate. Tyr-253 functions as the Proton acceptor; specific for L-alanine in the catalytic mechanism. Residue Met-301 participates in substrate binding.

The protein belongs to the alanine racemase family. It depends on pyridoxal 5'-phosphate as a cofactor.

The enzyme catalyses L-alanine = D-alanine. It functions in the pathway amino-acid biosynthesis; D-alanine biosynthesis; D-alanine from L-alanine: step 1/1. Functionally, catalyzes the interconversion of L-alanine and D-alanine. May also act on other amino acids. This chain is Alanine racemase (alr), found in Xanthomonas axonopodis pv. citri (strain 306).